A 133-amino-acid polypeptide reads, in one-letter code: Small ribosomal subunit protein uS8 (133 aa).

This sequence belongs to the universal ribosomal protein uS8 family. In terms of assembly, part of the 30S ribosomal subunit.

Its function is as follows. One of the primary rRNA binding proteins, it binds directly to 16S rRNA central domain where it helps coordinate assembly of the platform of the 30S subunit. The protein is Small ribosomal subunit protein uS8 of Ignicoccus hospitalis (strain KIN4/I / DSM 18386 / JCM 14125).